The following is a 422-amino-acid chain: Replication factor C large subunit (422 aa).

63–70 (GPPGVGKT) contacts ATP.

This sequence belongs to the activator 1 small subunits family. RfcL subfamily. As to quaternary structure, heteromultimer composed of small subunits (RfcS) and large subunits (RfcL).

In terms of biological role, part of the RFC clamp loader complex which loads the PCNA sliding clamp onto DNA. This is Replication factor C large subunit from Pyrobaculum arsenaticum (strain DSM 13514 / JCM 11321 / PZ6).